A 419-amino-acid chain; its full sequence is UDP-N-acetylglucosamine 1-carboxyvinyltransferase (419 aa).

A phosphoenolpyruvate-binding site is contributed by 22 to 23; that stretch reads KN. Arg92 serves as a coordination point for UDP-N-acetyl-alpha-D-glucosamine. Cys116 functions as the Proton donor in the catalytic mechanism. Cys116 is modified (2-(S-cysteinyl)pyruvic acid O-phosphothioketal). UDP-N-acetyl-alpha-D-glucosamine-binding residues include Asp307 and Val329.

The protein belongs to the EPSP synthase family. MurA subfamily.

The protein localises to the cytoplasm. It carries out the reaction phosphoenolpyruvate + UDP-N-acetyl-alpha-D-glucosamine = UDP-N-acetyl-3-O-(1-carboxyvinyl)-alpha-D-glucosamine + phosphate. It functions in the pathway cell wall biogenesis; peptidoglycan biosynthesis. Functionally, cell wall formation. Adds enolpyruvyl to UDP-N-acetylglucosamine. The protein is UDP-N-acetylglucosamine 1-carboxyvinyltransferase of Pseudothermotoga lettingae (strain ATCC BAA-301 / DSM 14385 / NBRC 107922 / TMO) (Thermotoga lettingae).